Reading from the N-terminus, the 301-residue chain is Probable 5-dehydro-4-deoxyglucarate dehydratase (301 aa).

It belongs to the DapA family.

The catalysed reaction is 5-dehydro-4-deoxy-D-glucarate + H(+) = 2,5-dioxopentanoate + CO2 + H2O. It participates in carbohydrate acid metabolism; D-glucarate degradation; 2,5-dioxopentanoate from D-glucarate: step 2/2. In Cereibacter sphaeroides (strain ATCC 17029 / ATH 2.4.9) (Rhodobacter sphaeroides), this protein is Probable 5-dehydro-4-deoxyglucarate dehydratase.